The following is a 409-amino-acid chain: Elongation factor 1-gamma (409 aa).

Residues 2 to 81 enclose the GST N-terminal domain; sequence SVGTVYGKIG…YLASLNKTRA (80 aa). Residues 86–212 form the GST C-terminal domain; that stretch reads TAEEKAKVLQ…EPLKFIDQPL (127 aa). Over residues 219-248 the composition is skewed to basic and acidic residues; that stretch reads NKEAAPAKKAEKKKDEKKKNAPKPQAERPA. The interval 219–261 is disordered; that stretch reads NKEAAPAKKAEKKKDEKKKNAPKPQAERPAKPPKHPLASAPNG. The region spanning 251-409 is the EF-1-gamma C-terminal domain; it reads PKHPLASAPN…REVADGKVCK (159 aa).

In terms of assembly, EF-1 is composed of four subunits: alpha, beta, delta, and gamma.

Its function is as follows. Probably plays a role in anchoring the complex to other cellular components. The polypeptide is Elongation factor 1-gamma (tef3) (Schizosaccharomyces pombe (strain 972 / ATCC 24843) (Fission yeast)).